A 1434-amino-acid polypeptide reads, in one-letter code: Probable deoxyribonuclease RhsA (1434 aa).

Positions 14–42 (AMHAGNRPNPPDDRPQPCRGKPPTSPGKT) are disordered. The next 2 membrane-spanning stretches (helical) occupy residues 48-68 (FLGA…VAAA) and 70-90 (VFLV…LAVF). YD repeat units lie at residues 486–521 (YDAA…CADG), 592–628 (DDTG…LGRE), and 847–876 (YDAR…LTEV).

Belongs to the RHS/WapA nuclease family.

It is found in the membrane. Its function is as follows. Toxic component of a toxin-immunity protein module, which functions as a cellular contact-dependent growth inhibition (CDI) system. This protein may be a nuclease that is specifically inhibited by its cognate immunity protein RhsAI. Upon expression of the C-terminus (residues 1284-1434) in E.coli growth is inhibited, cells elongate, nucleoids condense and plasmid DNA is degraded; these effects are blocked specifically by cognate immunity protein RshIA. Cell contact is necessary for growth inhibition. This Dickeya dadantii (strain 3937) (Erwinia chrysanthemi (strain 3937)) protein is Probable deoxyribonuclease RhsA (rhsA).